The sequence spans 268 residues: Ubiquinone biosynthesis protein COQ4 homolog, mitochondrial (268 aa).

The transit peptide at 1-25 directs the protein to the mitochondrion; the sequence is MMQRCLRLQKPLALRRGLHLAQVNS. Residues histidine 171, aspartate 172, histidine 175, and glutamate 187 each coordinate Zn(2+).

The protein belongs to the COQ4 family. Component of a multi-subunit COQ enzyme complex. It depends on Zn(2+) as a cofactor.

It is found in the mitochondrion inner membrane. The enzyme catalyses a 4-hydroxy-3-methoxy-5-(all-trans-polyprenyl)benzoate + H(+) = a 2-methoxy-6-(all-trans-polyprenyl)phenol + CO2. It functions in the pathway cofactor biosynthesis; ubiquinone biosynthesis. Its function is as follows. Lyase that catalyzes the C1-decarboxylation of 4-hydroxy-3-methoxy-5-(all-trans-polyprenyl)benzoic acid into 2-methoxy-6-(all-trans-polyprenyl)phenol during ubiquinone biosynthesis. This Drosophila simulans (Fruit fly) protein is Ubiquinone biosynthesis protein COQ4 homolog, mitochondrial.